The chain runs to 634 residues: MPDSLSLPLRPLIDKREHQDSLPVEIAQINAQWGAFRDVSEDSLRAQIEADKHKDPWAEDEESDGQSAADVDTSERLEQLYKRRAEITNFALQAHMEAMFALDFVSLLLSKYAPRQAETSMSAILKQVAPLGSLNAEVVNPPPKPESTAKDIKTVSRGWRLQNFDAAANRLLDAATRLESEVASETRYWEEVLAVKNKGWKVCRLPRERQALGVQYGFMEATPIFRDRGLAALRRADDGRLFLDKGLAPQRTRMLRVRVKHCGGISGCSKVQPAVTEDVESIENRILQARDTLYEEELFHEVFREARMLGNQGVITRQNLVQIPVSEEQDILLDLVDDQDLLSDETPMSHEHDTLANAISHSIHILLAYAHRQNLRRRTQPPPPLSTKRRHTPEYLLLRPVMAYLQHSSHVRWVESFLNDIHRVLQSAGLQCEFKATPFSSIRLPTKHTIPTVEALVQTFLAPLESTFSCKLPSSHGSFRVRVRTNAVVPPFGTHFDISVDMPEYPDIQPPSRIGLQEEVATALTHLTMLDILTAIRQDQKSAVEPSEDSKPTEQCLTWSAVYPHHGELVALSPTGPNKKIKVELSAQGLSVQSYTMRGEFTESIDEKASRAQSWKPDSTTPGSPGLMEFVRAV.

2 disordered regions span residues 51–73 and 606–626; these read DKHK…DVDT and DEKA…GSPG. The segment covering 611 to 623 has biased composition (polar residues); that stretch reads RAQSWKPDSTTPG.

Belongs to the Mediator complex subunit 17 family. In terms of assembly, component of the Mediator complex.

It is found in the nucleus. Functionally, component of the Mediator complex, a coactivator involved in the regulated transcription of nearly all RNA polymerase II-dependent genes. Mediator functions as a bridge to convey information from gene-specific regulatory proteins to the basal RNA polymerase II transcription machinery. Mediator is recruited to promoters by direct interactions with regulatory proteins and serves as a scaffold for the assembly of a functional preinitiation complex with RNA polymerase II and the general transcription factors. In Aspergillus terreus (strain NIH 2624 / FGSC A1156), this protein is Mediator of RNA polymerase II transcription subunit 17 (srb4).